Here is a 361-residue protein sequence, read N- to C-terminus: Large-conductance mechanosensitive channel MscMJLR (361 aa).

A run of 5 helical transmembrane segments spans residues 20–40 (ILSLISIILFIVIGKYANALI), 65–85 (LPVAIAIILSGFYFGVNFLYL), 89–109 (LKTAVNEGILTAFILCVVVFF), 137–157 (IVVLTKKLVRLVVWVVGLLLI), and 177–197 (LAVALASQNLVSNLIAGLIIL).

This sequence belongs to the MscS (TC 1.A.23) family.

The protein localises to the cell membrane. Functionally, large-conductance mechanosensitive channel that opens in response to stretch forces in the membrane lipid bilayer. Selective for cations. Rectifies with voltage. This chain is Large-conductance mechanosensitive channel MscMJLR, found in Methanocaldococcus jannaschii (strain ATCC 43067 / DSM 2661 / JAL-1 / JCM 10045 / NBRC 100440) (Methanococcus jannaschii).